Consider the following 732-residue polypeptide: Catalase-peroxidase (732 aa).

The interval 1–29 (MTTESKCPFSGGGKPNTPRRGPSNQDWWP) is disordered. A cross-link (tryptophyl-tyrosyl-methioninium (Trp-Tyr) (with M-249)) is located at residues 96-223 (WHSAGTYRIG…LAAVQMGLIY (128 aa)). The active-site Proton acceptor is the H97. Residues 223 to 249 (YVNPEGPDGNPDPVAAARDIRETFARM) constitute a cross-link (tryptophyl-tyrosyl-methioninium (Tyr-Met) (with W-96)). H264 provides a ligand contact to heme b.

This sequence belongs to the peroxidase family. Peroxidase/catalase subfamily. As to quaternary structure, homodimer or homotetramer. Requires heme b as cofactor. Post-translationally, formation of the three residue Trp-Tyr-Met cross-link is important for the catalase, but not the peroxidase activity of the enzyme.

The catalysed reaction is H2O2 + AH2 = A + 2 H2O. The enzyme catalyses 2 H2O2 = O2 + 2 H2O. Functionally, bifunctional enzyme with both catalase and broad-spectrum peroxidase activity. The polypeptide is Catalase-peroxidase (Serratia proteamaculans (strain 568)).